The primary structure comprises 555 residues: DNA repair and recombination protein rhm52 (555 aa).

Residues 148-152 (KRALR) mediate DNA binding. Disordered regions lie at residues 197–232 (VVAE…DSFD) and 251–555 (HPDE…MKLN). The span at 260–276 (NSHASGSSGNTGASTTN) shows a compositional bias: low complexity. 2 stretches are compositionally biased toward polar residues: residues 283-300 (SGNQ…SRMN) and 312-334 (TPNH…QNNH). Composition is skewed to low complexity over residues 354–375 (NNNN…GPQQ) and 382–404 (NGAA…AVAR). Residues 468–478 (DNPSNNAGNGV) show a composition bias toward polar residues. The segment covering 479–490 (QNQPQKPQPSQQ) has biased composition (low complexity). The span at 491–500 (RGSILNPQFD) shows a compositional bias: polar residues. Low complexity predominate over residues 536 to 547 (PNGTSNGNGTPG).

Belongs to the RAD52 family. In terms of assembly, part of a complex that includes RAD51, RAD52 and RAD59.

It localises to the nucleus. Its function is as follows. Involved in DNA double-strand break (DSB) repair and recombination. Promotes the annealing of complementary single-stranded DNA and by stimulation of the RAD51 recombinase. This is DNA repair and recombination protein rhm52 (RHM52) from Pyricularia oryzae (strain 70-15 / ATCC MYA-4617 / FGSC 8958) (Rice blast fungus).